Reading from the N-terminus, the 239-residue chain is Purine nucleoside phosphorylase DeoD-type (239 aa).

H5 is a binding site for a purine D-ribonucleoside. Phosphate is bound by residues G21, R25, R44, and 88–91 (RVGS). A purine D-ribonucleoside contacts are provided by residues 180-182 (EME) and 204-205 (SD). The active-site Proton donor is the D205.

The protein belongs to the PNP/UDP phosphorylase family. In terms of assembly, homohexamer; trimer of homodimers.

The catalysed reaction is a purine D-ribonucleoside + phosphate = a purine nucleobase + alpha-D-ribose 1-phosphate. The enzyme catalyses a purine 2'-deoxy-D-ribonucleoside + phosphate = a purine nucleobase + 2-deoxy-alpha-D-ribose 1-phosphate. Catalyzes the reversible phosphorolytic breakdown of the N-glycosidic bond in the beta-(deoxy)ribonucleoside molecules, with the formation of the corresponding free purine bases and pentose-1-phosphate. The chain is Purine nucleoside phosphorylase DeoD-type from Salmonella gallinarum (strain 287/91 / NCTC 13346).